The primary structure comprises 218 residues: Ribose-5-phosphate isomerase A (218 aa).

Residues 28–31 (TGST), 81–84 (DGAD), and 94–97 (KGGG) contribute to the substrate site. Catalysis depends on E103, which acts as the Proton acceptor. K121 is a substrate binding site.

This sequence belongs to the ribose 5-phosphate isomerase family. As to quaternary structure, homodimer.

The enzyme catalyses aldehydo-D-ribose 5-phosphate = D-ribulose 5-phosphate. Its pathway is carbohydrate degradation; pentose phosphate pathway; D-ribose 5-phosphate from D-ribulose 5-phosphate (non-oxidative stage): step 1/1. Catalyzes the reversible conversion of ribose-5-phosphate to ribulose 5-phosphate. In Vibrio parahaemolyticus serotype O3:K6 (strain RIMD 2210633), this protein is Ribose-5-phosphate isomerase A.